Consider the following 448-residue polypeptide: Probable D-serine dehydratase (448 aa).

Lysine 119 is subject to N6-(pyridoxal phosphate)lysine.

It belongs to the serine/threonine dehydratase family. DsdA subfamily. Pyridoxal 5'-phosphate serves as cofactor.

The enzyme catalyses D-serine = pyruvate + NH4(+). The sequence is that of Probable D-serine dehydratase from Chromobacterium violaceum (strain ATCC 12472 / DSM 30191 / JCM 1249 / CCUG 213 / NBRC 12614 / NCIMB 9131 / NCTC 9757 / MK).